We begin with the raw amino-acid sequence, 96 residues long: Uteroglobin (96 aa).

The signal sequence occupies residues 1 to 21 (MKIAITITVVMLSICCSSASS).

Belongs to the secretoglobin family. As to quaternary structure, antiparallel homodimer; disulfide-linked. Interaction with LMBR1L is controversial. Club cells (nonciliated cells of the surface epithelium of the pulmonary airways).

The protein localises to the secreted. Binds phosphatidylcholine, phosphatidylinositol, polychlorinated biphenyls (PCB) and weakly progesterone, potent inhibitor of phospholipase A2. This Mus musculus (Mouse) protein is Uteroglobin (Scgb1a1).